Reading from the N-terminus, the 71-residue chain is Large ribosomal subunit protein bL31 (71 aa).

Positions 16, 18, 37, and 40 each coordinate Zn(2+).

It belongs to the bacterial ribosomal protein bL31 family. Type A subfamily. Part of the 50S ribosomal subunit. Requires Zn(2+) as cofactor.

In terms of biological role, binds the 23S rRNA. The protein is Large ribosomal subunit protein bL31 of Pseudomonas aeruginosa (strain LESB58).